The primary structure comprises 205 residues: MRYTSAAIETLIEEFAKLPGIGRKTAQRLAMHILHEPKSGAERLAGALIDIKEKVIRCSVCQNVTDRDADPCYICSSTGRDRSVICVVESPADVLAFEKTGHYKGQYHVLHGLVSPLDGIGPDDIRIHELLARLGERHEAVPVKEVVLALNPTVEGETTSLYITRLLKPFGISVTKIARGIPVGAELEFIDEATLSRAMEGRSAV.

A C4-type zinc finger spans residues 58–75 (CSVCQNVTDRDADPCYIC). Positions 83-182 (SVICVVESPA…SVTKIARGIP (100 aa)) constitute a Toprim domain.

The protein belongs to the RecR family.

Its function is as follows. May play a role in DNA repair. It seems to be involved in an RecBC-independent recombinational process of DNA repair. It may act with RecF and RecO. The protein is Recombination protein RecR of Chlorobium limicola (strain DSM 245 / NBRC 103803 / 6330).